Consider the following 77-residue polypeptide: MAAIEVGRVCIKTLGREAGNVCVIVEVLDKNYIVVDGNVKRRRCNVKHVEPTDKKVELEKGASTEEVKLSLDAAGLL.

It belongs to the eukaryotic ribosomal protein eL14 family.

The protein is Large ribosomal subunit protein eL14 of Methanococcus vannielii (strain ATCC 35089 / DSM 1224 / JCM 13029 / OCM 148 / SB).